A 282-amino-acid chain; its full sequence is Protease HtpX homolog (282 aa).

Transmembrane regions (helical) follow at residues 7 to 26 (TTVL…GAVG) and 30 to 49 (GMMI…YWFS). His-131 contributes to the Zn(2+) binding site. Residue Glu-132 is part of the active site. His-135 lines the Zn(2+) pocket. 2 helical membrane-spanning segments follow: residues 141-161 (ILVS…ARMA) and 183-203 (LGLV…QLAI). Residue Glu-208 participates in Zn(2+) binding.

It belongs to the peptidase M48B family. Requires Zn(2+) as cofactor.

It localises to the cell inner membrane. This Syntrophobacter fumaroxidans (strain DSM 10017 / MPOB) protein is Protease HtpX homolog.